Reading from the N-terminus, the 115-residue chain is Holo-[acyl-carrier-protein] synthase (115 aa).

Residues aspartate 8 and glutamate 50 each coordinate Mg(2+).

It belongs to the P-Pant transferase superfamily. AcpS family. It depends on Mg(2+) as a cofactor.

The protein localises to the cytoplasm. It carries out the reaction apo-[ACP] + CoA = holo-[ACP] + adenosine 3',5'-bisphosphate + H(+). In terms of biological role, transfers the 4'-phosphopantetheine moiety from coenzyme A to a Ser of acyl-carrier-protein. The protein is Holo-[acyl-carrier-protein] synthase of Cutibacterium acnes (strain DSM 16379 / KPA171202) (Propionibacterium acnes).